We begin with the raw amino-acid sequence, 305 residues long: Methionyl-tRNA formyltransferase (305 aa).

109 to 112 (SLLP) serves as a coordination point for (6S)-5,6,7,8-tetrahydrofolate.

This sequence belongs to the Fmt family.

The catalysed reaction is L-methionyl-tRNA(fMet) + (6R)-10-formyltetrahydrofolate = N-formyl-L-methionyl-tRNA(fMet) + (6S)-5,6,7,8-tetrahydrofolate + H(+). Attaches a formyl group to the free amino group of methionyl-tRNA(fMet). The formyl group appears to play a dual role in the initiator identity of N-formylmethionyl-tRNA by promoting its recognition by IF2 and preventing the misappropriation of this tRNA by the elongation apparatus. In Paramagnetospirillum magneticum (strain ATCC 700264 / AMB-1) (Magnetospirillum magneticum), this protein is Methionyl-tRNA formyltransferase.